A 304-amino-acid chain; its full sequence is uncharacterized protein (304 aa).

9 helical membrane-spanning segments follow: residues 9-29 (VFYVLLMGLGFPIMRFMSIHF), 67-87 (IILYLFIYLFILGIFMTGNMF), 100-120 (AGSIFGILAMPLAIIIAGIFF), 131-151 (EFYIGELLAIIGSLIFVINSS), 159-179 (FFLGAIFLFTAIFIQSVQNLI), 189-209 (AVVISASTATISGVLFLCLAF), 222-242 (IGMLIGLVCAGFYGMLTGMLM), 252-272 (ITVFNILQLLIPLSTAIIGYL), and 278-298 (INIYQGISGIIVIIGCVLALK). 2 EamA domains span residues 13–148 (LLMG…IFVI) and 171–298 (FIQS…LALK).

Belongs to the EamA transporter family.

It localises to the cell membrane. This is an uncharacterized protein from Haemophilus influenzae (strain ATCC 51907 / DSM 11121 / KW20 / Rd).